Reading from the N-terminus, the 733-residue chain is Catalase-peroxidase (733 aa).

A disordered region spans residues 1–25 (MNEERKCPITGATHKPSAEKGRSNH). The span at 16–25 (PSAEKGRSNH) shows a compositional bias: basic and acidic residues. The tryptophyl-tyrosyl-methioninium (Trp-Tyr) (with M-245) cross-link spans 96-219 (WHSAGTYRTS…LAAVQMGLIY (124 aa)). His-97 acts as the Proton acceptor in catalysis. The tryptophyl-tyrosyl-methioninium (Tyr-Met) (with W-96) cross-link spans 219–245 (YVNPEGPNGKPDPLAAAKDIRETFARM). Residue His-260 participates in heme b binding.

It belongs to the peroxidase family. Peroxidase/catalase subfamily. As to quaternary structure, homodimer or homotetramer. Requires heme b as cofactor. Post-translationally, formation of the three residue Trp-Tyr-Met cross-link is important for the catalase, but not the peroxidase activity of the enzyme.

The enzyme catalyses H2O2 + AH2 = A + 2 H2O. The catalysed reaction is 2 H2O2 = O2 + 2 H2O. Bifunctional enzyme with both catalase and broad-spectrum peroxidase activity. The chain is Catalase-peroxidase from Chlorobium chlorochromatii (strain CaD3).